The following is a 308-amino-acid chain: 4-diphosphocytidyl-2-C-methyl-D-erythritol kinase (308 aa).

K24 is an active-site residue. Position 118 to 128 (118 to 128 (PVGAGMAGGSA)) interacts with ATP. D160 is an active-site residue.

The protein belongs to the GHMP kinase family. IspE subfamily.

It catalyses the reaction 4-CDP-2-C-methyl-D-erythritol + ATP = 4-CDP-2-C-methyl-D-erythritol 2-phosphate + ADP + H(+). It participates in isoprenoid biosynthesis; isopentenyl diphosphate biosynthesis via DXP pathway; isopentenyl diphosphate from 1-deoxy-D-xylulose 5-phosphate: step 3/6. In terms of biological role, catalyzes the phosphorylation of the position 2 hydroxy group of 4-diphosphocytidyl-2C-methyl-D-erythritol. This Bifidobacterium adolescentis (strain ATCC 15703 / DSM 20083 / NCTC 11814 / E194a) protein is 4-diphosphocytidyl-2-C-methyl-D-erythritol kinase.